The sequence spans 148 residues: Transcriptional regulator MraZ (148 aa).

SpoVT-AbrB domains follow at residues 5 to 51 and 80 to 123; these read STQL…PQPV and ASDV…DMAK.

Belongs to the MraZ family. In terms of assembly, forms oligomers.

It is found in the cytoplasm. The protein resides in the nucleoid. This Nitrosomonas europaea (strain ATCC 19718 / CIP 103999 / KCTC 2705 / NBRC 14298) protein is Transcriptional regulator MraZ.